The chain runs to 207 residues: MKLRGLYAITDSQLLAGRFLSHVEAALDGGVCLLQYRDKSDDAARRLREAEGLMKLCERYGTQLLINDDAELAARLGVGVHLGQTDGPLTPARTLLGRQAIIGSTCHASLELAAQAASEGASYVAFGRFFNSVTKPGAPAANVDLLEQARAQVKLPIAVIGGITLDNAAPLVAHGADLLAVIHGLFGADSAQEVTRRARAFNALFAS.

4-amino-2-methyl-5-(diphosphooxymethyl)pyrimidine is bound by residues 35-39 and N67; that span reads QYRDK. D68 and D86 together coordinate Mg(2+). 4-amino-2-methyl-5-(diphosphooxymethyl)pyrimidine is bound at residue T105. Residue 132–134 coordinates 2-[(2R,5Z)-2-carboxy-4-methylthiazol-5(2H)-ylidene]ethyl phosphate; sequence SVT. Residue K135 coordinates 4-amino-2-methyl-5-(diphosphooxymethyl)pyrimidine. G162 contacts 2-[(2R,5Z)-2-carboxy-4-methylthiazol-5(2H)-ylidene]ethyl phosphate.

This sequence belongs to the thiamine-phosphate synthase family. The cofactor is Mg(2+).

The enzyme catalyses 2-[(2R,5Z)-2-carboxy-4-methylthiazol-5(2H)-ylidene]ethyl phosphate + 4-amino-2-methyl-5-(diphosphooxymethyl)pyrimidine + 2 H(+) = thiamine phosphate + CO2 + diphosphate. The catalysed reaction is 2-(2-carboxy-4-methylthiazol-5-yl)ethyl phosphate + 4-amino-2-methyl-5-(diphosphooxymethyl)pyrimidine + 2 H(+) = thiamine phosphate + CO2 + diphosphate. It carries out the reaction 4-methyl-5-(2-phosphooxyethyl)-thiazole + 4-amino-2-methyl-5-(diphosphooxymethyl)pyrimidine + H(+) = thiamine phosphate + diphosphate. It functions in the pathway cofactor biosynthesis; thiamine diphosphate biosynthesis; thiamine phosphate from 4-amino-2-methyl-5-diphosphomethylpyrimidine and 4-methyl-5-(2-phosphoethyl)-thiazole: step 1/1. Condenses 4-methyl-5-(beta-hydroxyethyl)thiazole monophosphate (THZ-P) and 2-methyl-4-amino-5-hydroxymethyl pyrimidine pyrophosphate (HMP-PP) to form thiamine monophosphate (TMP). This is Thiamine-phosphate synthase from Pseudomonas putida (strain GB-1).